The chain runs to 324 residues: Proto-oncogene Mas (324 aa).

The Extracellular segment spans residues 1 to 35; that stretch reads MDQSNMTSFAEEKAMNTSSRNASLGTSHPPIPIVH. N-linked (GlcNAc...) asparagine glycans are attached at residues asparagine 5, asparagine 16, and asparagine 21. The chain crosses the membrane as a helical span at residues 36–60; the sequence is WVIMSISPLGFVENGILLWFLCFRM. Residues 61 to 64 are Cytoplasmic-facing; that stretch reads RRNP. The chain crosses the membrane as a helical span at residues 65–86; that stretch reads FTVYITHLSIADISLLFCIFIL. Residues 87–103 lie on the Extracellular side of the membrane; it reads SIDYALDYELSSGHYYT. Residues 104-127 form a helical membrane-spanning segment; that stretch reads IVTLSVTFLFGYNTGLYLLTAISV. Residues 128-148 are Cytoplasmic-facing; sequence ERCLSVLYPIWYRCHRPKHQS. Residues 149-171 form a helical membrane-spanning segment; it reads AFVCALLWALSCLVTTMEYVMCI. Residues 172 to 184 are Extracellular-facing; the sequence is DSGEESHSQSDCR. Residues 185–205 form a helical membrane-spanning segment; sequence AVIIFIAILSFLVFTPLMLVS. Over 206–223 the chain is Cytoplasmic; the sequence is STILVVKIRKNTWASHSS. A helical transmembrane segment spans residues 224 to 244; the sequence is KLYIVIMVTIIIFLIFAMPMR. The Extracellular segment spans residues 245–262; it reads VLYLLYYEYWSTFGNLHN. Residues 263 to 283 traverse the membrane as a helical segment; the sequence is ISLLFSTINSSANPFIYFFVG. Over 284–324 the chain is Cytoplasmic; it reads SSKKKRFRESLKVVLTRAFKDEMQPRRQEGNGNTVSIETVV.

The protein belongs to the G-protein coupled receptor 1 family. In terms of assembly, interacts with AGTR1. Interacts with FLNA (via filamin repeat 21); increases PKA-mediated phosphorylation of FLNA. In terms of tissue distribution, expressed in platelets.

It localises to the cell membrane. Functionally, receptor for angiotensin 1-7. Acts specifically as a functional antagonist of AGTR1 (angiotensin-2 type 1 receptor), although it up-regulates AGTR1 receptor levels. Positive regulation of AGTR1 levels occurs through activation of the G-proteins GNA11 and GNAQ, and stimulation of the protein kinase C signaling cascade. The antagonist effect on AGTR1 function is probably due to AGTR1 being physically altered by MAS1. The sequence is that of Proto-oncogene Mas (Mas1) from Rattus norvegicus (Rat).